A 488-amino-acid polypeptide reads, in one-letter code: MGADAAIGQIKDAKKRYAAGVLKYAQMGYWDGDYQPKDTDVLALFRITPQDGVDAVEAAAAVAGESSTATWTVVWTDRLTAADMYRAKAYKVEPVPGQPGQYFCWVAYDLDLFEEGSIANLTASIIGNVFSFKPLKACRLEDMRLPVAYVKTFRGPPTGIVVERERLDKFGRPLLGATTKPKLGLSGKNYGRVVYEGLKGGLDFVKDDENINSQPFMHWRDRFLYCMEAVNKAQAETGEVKGHYLNITAGTMEEMYRRAEFAKELGSVVVMVDLIVGWTAIQSISNWCRENDVLLHMHRAGHGTYTRQKGHGISFRVIAKWLRLAGVDHLHTGTAVGKLEGDPMTVQGYYNVCRETVTKTDYTRGIFFDQDWAGLRKVMPVASGGIHAGQMHQLIDLFGEDVVLQFGGGTIGHPDGIQAGAIANRVALETMILARNEGRDIKNEGPEILIEAAKWCRPLRAALDTWGEVTFNYASTDTSDFVPTASVA.

The substrate site is built by Asn128 and Thr178. The active-site Proton acceptor is Lys180. Lys182 contacts substrate. Residues Lys206, Asp208, and Glu209 each coordinate Mg(2+). Residue Lys206 is modified to N6-carboxylysine. His298 (proton acceptor) is an active-site residue. 3 residues coordinate substrate: Arg299, His331, and Ser383.

Belongs to the RuBisCO large chain family. Type I subfamily. In terms of assembly, heterohexadecamer of 8 large chains and 8 small chains. Mg(2+) serves as cofactor.

The enzyme catalyses 2 (2R)-3-phosphoglycerate + 2 H(+) = D-ribulose 1,5-bisphosphate + CO2 + H2O. The catalysed reaction is D-ribulose 1,5-bisphosphate + O2 = 2-phosphoglycolate + (2R)-3-phosphoglycerate + 2 H(+). In terms of biological role, ruBisCO catalyzes two reactions: the carboxylation of D-ribulose 1,5-bisphosphate, the primary event in carbon dioxide fixation, as well as the oxidative fragmentation of the pentose substrate. Both reactions occur simultaneously and in competition at the same active site. The sequence is that of Ribulose bisphosphate carboxylase large chain from Xanthobacter autotrophicus (strain ATCC BAA-1158 / Py2).